A 348-amino-acid chain; its full sequence is Phosphoribosylformylglycinamidine cyclo-ligase (348 aa).

This sequence belongs to the AIR synthase family.

It is found in the cytoplasm. The enzyme catalyses 2-formamido-N(1)-(5-O-phospho-beta-D-ribosyl)acetamidine + ATP = 5-amino-1-(5-phospho-beta-D-ribosyl)imidazole + ADP + phosphate + H(+). It functions in the pathway purine metabolism; IMP biosynthesis via de novo pathway; 5-amino-1-(5-phospho-D-ribosyl)imidazole from N(2)-formyl-N(1)-(5-phospho-D-ribosyl)glycinamide: step 2/2. This Geobacter sulfurreducens (strain ATCC 51573 / DSM 12127 / PCA) protein is Phosphoribosylformylglycinamidine cyclo-ligase.